A 508-amino-acid chain; its full sequence is DDB1- and CUL4-associated factor 10 (508 aa).

Residues 1-75 (MSSGHPSDNE…GSASGSGCRG (75 aa)) form a disordered region. Residues 7–17 (SDNEEPRADLL) are compositionally biased toward basic and acidic residues. Acidic residues predominate over residues 18–32 (REEEEEEEEEEDSDE). A compositionally biased stretch (gly residues) spans 63–75 (GGTGSASGSGCRG). WD repeat units lie at residues 126–165 (QTHG…HIKT), 169–207 (AHED…SKVC), 211–250 (GHAS…EDGC), and 256–295 (FHTR…QSLE). The segment at 307–343 (PPLSTEGSSAGSRSGGPRHTIDNKNHPHREGLSPRNS) is disordered. Residues 325–338 (HTIDNKNHPHREGL) show a composition bias toward basic and acidic residues. WD repeat units lie at residues 356–396 (DRGN…QEGA), 419–457 (VGRG…AELV), and 475–508 (SHSD…QPHF).

It belongs to the WD repeat DCAF10 family.

It functions in the pathway protein modification; protein ubiquitination. May function as a substrate receptor for CUL4-DDB1 E3 ubiquitin-protein ligase complex. The sequence is that of DDB1- and CUL4-associated factor 10 (dcaf10) from Danio rerio (Zebrafish).